A 355-amino-acid polypeptide reads, in one-letter code: Tetraacyldisaccharide 4'-kinase (355 aa).

ATP is bound at residue 64-71 (YVGGTGKT). Positions 206-226 (NRAPQSSATPTAASGQGPRRA) are disordered. A compositionally biased stretch (low complexity) spans 208–222 (APQSSATPTAASGQG).

This sequence belongs to the LpxK family.

It carries out the reaction a lipid A disaccharide + ATP = a lipid IVA + ADP + H(+). The protein operates within glycolipid biosynthesis; lipid IV(A) biosynthesis; lipid IV(A) from (3R)-3-hydroxytetradecanoyl-[acyl-carrier-protein] and UDP-N-acetyl-alpha-D-glucosamine: step 6/6. Transfers the gamma-phosphate of ATP to the 4'-position of a tetraacyldisaccharide 1-phosphate intermediate (termed DS-1-P) to form tetraacyldisaccharide 1,4'-bis-phosphate (lipid IVA). This is Tetraacyldisaccharide 4'-kinase from Bordetella petrii (strain ATCC BAA-461 / DSM 12804 / CCUG 43448).